The primary structure comprises 246 residues: 3'(2'),5'-bisphosphate nucleotidase CysQ (246 aa).

Mg(2+)-binding residues include Glu64, Asp83, Leu85, Asp86, and Asp205. Glu64 contacts substrate. Substrate contacts are provided by residues 85 to 88 (LDGT) and Asp205.

This sequence belongs to the inositol monophosphatase superfamily. CysQ family. The cofactor is Mg(2+).

The protein localises to the cell inner membrane. It carries out the reaction adenosine 3',5'-bisphosphate + H2O = AMP + phosphate. With respect to regulation, inhibited by lithium and calcium. Converts adenosine-3',5'-bisphosphate (PAP) to AMP. May also convert adenosine 3'-phosphate 5'-phosphosulfate (PAPS) to adenosine 5'-phosphosulfate (APS). Has 10000-fold lower activity towards inositol 1,4-bisphosphate (Ins(1,4)P2). The chain is 3'(2'),5'-bisphosphate nucleotidase CysQ from Escherichia coli (strain K12).